Reading from the N-terminus, the 429-residue chain is Gamma-glutamyl phosphate reductase (429 aa).

Belongs to the gamma-glutamyl phosphate reductase family.

It is found in the cytoplasm. The enzyme catalyses L-glutamate 5-semialdehyde + phosphate + NADP(+) = L-glutamyl 5-phosphate + NADPH + H(+). The protein operates within amino-acid biosynthesis; L-proline biosynthesis; L-glutamate 5-semialdehyde from L-glutamate: step 2/2. Functionally, catalyzes the NADPH-dependent reduction of L-glutamate 5-phosphate into L-glutamate 5-semialdehyde and phosphate. The product spontaneously undergoes cyclization to form 1-pyrroline-5-carboxylate. The chain is Gamma-glutamyl phosphate reductase from Methylocella silvestris (strain DSM 15510 / CIP 108128 / LMG 27833 / NCIMB 13906 / BL2).